The following is a 496-amino-acid chain: MDDKQHTSSSDDERAEIATSNQDQQTNSSKRVHLKRWQFISILIGTILITAVITVVAYIFINQKINGLNKTDQANLNKIENVYKILNSDYYKKQSSDKLSKAAIDGMVKELKDPYSEYLTKEQTKSFNEGVSGDFVGIGAEMQKKNDQIMVTSPMKGSPAERAGIRPKDVITKVNGKSIKGKALDEVVKDVRGKENTEVTLTVQRGSEEKDVKIKREKIHVKSVEYKKKGKVGVITINKFQNDTSGELKDAVLKAHKDGLKKIVLDLRNNPGGLLDEAVKMANIFIDKGKTVVKLEKGKDTEAIQTSNDALKEAKDMDISILVNEGSASASEVFTGALKDYNKAKVYGSKTFGKGVVQTTREFKDGSLLKYTEMKWLTPDGHYIHGKGIKPDVTIDTPKYQSLNVIPNTKTFKVGDDDKNIKTIKIGLSALGYKVDNESTQFDQALENQVKAFQQTNKLEVTGEFNKETNNKFTELLVEKANKHDDVLDKLINILK.

The segment covering 1-16 (MDDKQHTSSSDDERAE) has biased composition (basic and acidic residues). The segment at 1 to 27 (MDDKQHTSSSDDERAEIATSNQDQQTN) is disordered. The span at 18–27 (ATSNQDQQTN) shows a compositional bias: polar residues. Residues 39-59 (FISILIGTILITAVITVVAYI) form a helical membrane-spanning segment. The 83-residue stretch at 124-206 (TKSFNEGVSG…TEVTLTVQRG (83 aa)) folds into the PDZ domain. Catalysis depends on charge relay system residues Ser329, Asp340, and Lys354.

This sequence belongs to the peptidase S41A family.

It is found in the cell membrane. The protein is Probable CtpA-like serine protease of Staphylococcus aureus (strain bovine RF122 / ET3-1).